The primary structure comprises 831 residues: Translation initiation factor IF-2 (831 aa).

Residues Thr-329–Lys-499 enclose the tr-type G domain. Residues Gly-338 to Thr-345 form a G1 region. Position 338-345 (Gly-338–Thr-345) interacts with GTP. A G2 region spans residues Gly-363–His-367. The G3 stretch occupies residues Asp-385 to Gly-388. GTP-binding positions include Asp-385–His-389 and Asn-439–Asp-442. The interval Asn-439–Asp-442 is G4. The interval Ser-475–Leu-477 is G5.

It belongs to the TRAFAC class translation factor GTPase superfamily. Classic translation factor GTPase family. IF-2 subfamily.

Its subcellular location is the cytoplasm. Functionally, one of the essential components for the initiation of protein synthesis. Protects formylmethionyl-tRNA from spontaneous hydrolysis and promotes its binding to the 30S ribosomal subunits. Also involved in the hydrolysis of GTP during the formation of the 70S ribosomal complex. This Rickettsia prowazekii (strain Madrid E) protein is Translation initiation factor IF-2 (infB).